The chain runs to 206 residues: Large ribosomal subunit protein uL4 (206 aa).

Positions 43 to 78 (ARSGNRAQKDREQVKHTTKKPWRQKGTGRARAGMSS) are disordered. Basic residues predominate over residues 58–70 (HTTKKPWRQKGTG).

This sequence belongs to the universal ribosomal protein uL4 family. In terms of assembly, part of the 50S ribosomal subunit.

Functionally, one of the primary rRNA binding proteins, this protein initially binds near the 5'-end of the 23S rRNA. It is important during the early stages of 50S assembly. It makes multiple contacts with different domains of the 23S rRNA in the assembled 50S subunit and ribosome. In terms of biological role, forms part of the polypeptide exit tunnel. This is Large ribosomal subunit protein uL4 from Polynucleobacter necessarius subsp. necessarius (strain STIR1).